Consider the following 177-residue polypeptide: NADH-quinone oxidoreductase subunit B (177 aa).

4 residues coordinate [4Fe-4S] cluster: cysteine 56, cysteine 57, cysteine 121, and cysteine 151.

This sequence belongs to the complex I 20 kDa subunit family. As to quaternary structure, NDH-1 is composed of 14 different subunits. Subunits NuoB, C, D, E, F, and G constitute the peripheral sector of the complex. [4Fe-4S] cluster serves as cofactor.

It localises to the cell inner membrane. The catalysed reaction is a quinone + NADH + 5 H(+)(in) = a quinol + NAD(+) + 4 H(+)(out). Its function is as follows. NDH-1 shuttles electrons from NADH, via FMN and iron-sulfur (Fe-S) centers, to quinones in the respiratory chain. Couples the redox reaction to proton translocation (for every two electrons transferred, four hydrogen ions are translocated across the cytoplasmic membrane), and thus conserves the redox energy in a proton gradient. This chain is NADH-quinone oxidoreductase subunit B, found in Roseobacter denitrificans (strain ATCC 33942 / OCh 114) (Erythrobacter sp. (strain OCh 114)).